Here is a 137-residue protein sequence, read N- to C-terminus: Histone H2B (137 aa).

A compositionally biased stretch (basic and acidic residues) spans 1 to 10; that stretch reads MPPKAADKKP. The tract at residues 1–45 is disordered; sequence MPPKAADKKPASKAPATASKAPEKKDAGKKTAASGDKKKRTKTRK. An N6-acetyllysine; alternate mark is found at lysine 8 and lysine 9. Glycyl lysine isopeptide (Lys-Gly) (interchain with G-Cter in SUMO); alternate cross-links involve residues lysine 8 and lysine 9. Position 12 is a phosphoserine (serine 12). Lysine 13 is modified (N6-acetyllysine). Lysine 24 bears the N6-acetyllysine; alternate mark. Lysine 24 is covalently cross-linked (Glycyl lysine isopeptide (Lys-Gly) (interchain with G-Cter in SUMO); alternate). Lysine 25 is covalently cross-linked (Glycyl lysine isopeptide (Lys-Gly) (interchain with G-Cter in SUMO)). Lysine 131 participates in a covalent cross-link: Glycyl lysine isopeptide (Lys-Gly) (interchain with G-Cter in ubiquitin).

Belongs to the histone H2B family. The nucleosome is a histone octamer containing two molecules each of H2A, H2B, H3 and H4 assembled in one H3-H4 heterotetramer and two H2A-H2B heterodimers. The octamer wraps approximately 147 bp of DNA. Post-translationally, monoubiquitinated by the UBC2-BRE1 complex to form H2BK123ub1. H2BK123ub1 gives a specific tag for epigenetic transcriptional activation and is also prerequisite for H3K4me and H3K79me formation. H2BK123ub1 also modulates the formation of double-strand breaks during meiosis and is a prerequisite for DNA-damage checkpoint activation. In terms of processing, phosphorylated by STE20 to form H2BS10ph during progression through meiotic prophase. May be correlated with chromosome condensation. Acetylated by GCN5 to form H2BK11ac and H2BK16ac. H2BK16ac can also be formed by ESA1. Acetylation of N-terminal lysines and particularly formation of H2BK11acK16ac has a positive effect on transcription. Post-translationally, sumoylation to form H2BK6su or H2BK7su, and probably also H2BK16su or H2BK17su, occurs preferentially near the telomeres and represses gene transcription.

It is found in the nucleus. Its subcellular location is the chromosome. Its function is as follows. Core component of nucleosome. Nucleosomes wrap and compact DNA into chromatin, limiting DNA accessibility to the cellular machineries which require DNA as a template. Histones thereby play a central role in transcription regulation, DNA repair, DNA replication and chromosomal stability. DNA accessibility is regulated via a complex set of post-translational modifications of histones, also called histone code, and nucleosome remodeling. In Pyricularia oryzae (strain Y34) (Rice blast fungus), this protein is Histone H2B (HTB1).